Consider the following 99-residue polypeptide: DNA-directed RNA polymerase subunit omega (99 aa).

This sequence belongs to the RNA polymerase subunit omega family. In terms of assembly, the RNAP catalytic core consists of 2 alpha, 1 beta, 1 beta' and 1 omega subunit. When a sigma factor is associated with the core the holoenzyme is formed, which can initiate transcription.

The enzyme catalyses RNA(n) + a ribonucleoside 5'-triphosphate = RNA(n+1) + diphosphate. Functionally, promotes RNA polymerase assembly. Latches the N- and C-terminal regions of the beta' subunit thereby facilitating its interaction with the beta and alpha subunits. In Stenotrophomonas maltophilia (strain K279a), this protein is DNA-directed RNA polymerase subunit omega.